Consider the following 357-residue polypeptide: Hyaluronidase (357 aa).

The first 26 residues, 1–26 (MLLVTLFLFFLQALVNGDSCGSNCEK), serve as a signal peptide directing secretion. 2 disulfide bridges follow: C45–C334 and C211–C223. N-linked (GlcNAc...) asparagine glycosylation is found at N105 and N125. Catalysis depends on E135, which acts as the Proton donor. The N-linked (GlcNAc...) asparagine glycan is linked to N153. An N-linked (GlcNAc...) asparagine glycan is attached at N351.

The protein belongs to the glycosyl hydrolase 56 family.

Its subcellular location is the secreted. The enzyme catalyses Random hydrolysis of (1-&gt;4)-linkages between N-acetyl-beta-D-glucosamine and D-glucuronate residues in hyaluronate.. Functionally, hydrolyzes high molecular weight hyaluronic acid to produce small oligosaccharides. The polypeptide is Hyaluronidase (Vespa magnifica (Hornet)).